Consider the following 279-residue polypeptide: Pantothenate synthetase (279 aa).

Residue 26–33 coordinates ATP; that stretch reads MGNLHEGH. H33 serves as the catalytic Proton donor. Position 57 (Q57) interacts with (R)-pantoate. Residue Q57 participates in beta-alanine binding. 144–147 is a binding site for ATP; that stretch reads GKKD. (R)-pantoate is bound at residue Q150. Residues V173 and 181-184 contribute to the ATP site; that span reads LSSR.

This sequence belongs to the pantothenate synthetase family. As to quaternary structure, homodimer.

The protein resides in the cytoplasm. The catalysed reaction is (R)-pantoate + beta-alanine + ATP = (R)-pantothenate + AMP + diphosphate + H(+). It participates in cofactor biosynthesis; (R)-pantothenate biosynthesis; (R)-pantothenate from (R)-pantoate and beta-alanine: step 1/1. Catalyzes the condensation of pantoate with beta-alanine in an ATP-dependent reaction via a pantoyl-adenylate intermediate. This is Pantothenate synthetase from Burkholderia thailandensis (strain ATCC 700388 / DSM 13276 / CCUG 48851 / CIP 106301 / E264).